Consider the following 250-residue polypeptide: 2,3-bisphosphoglycerate-dependent phosphoglycerate mutase (250 aa).

Residues 8–15 (RHGESQWN), 21–22 (TG), Arg-60, 87–90 (ERHY), Lys-98, 114–115 (RR), and 183–184 (GN) contribute to the substrate site. His-9 serves as the catalytic Tele-phosphohistidine intermediate. Glu-87 functions as the Proton donor/acceptor in the catalytic mechanism.

It belongs to the phosphoglycerate mutase family. BPG-dependent PGAM subfamily. Homodimer.

The catalysed reaction is (2R)-2-phosphoglycerate = (2R)-3-phosphoglycerate. It participates in carbohydrate degradation; glycolysis; pyruvate from D-glyceraldehyde 3-phosphate: step 3/5. In terms of biological role, catalyzes the interconversion of 2-phosphoglycerate and 3-phosphoglycerate. This chain is 2,3-bisphosphoglycerate-dependent phosphoglycerate mutase, found in Bordetella avium (strain 197N).